The chain runs to 229 residues: High molecular weight rubredoxin (229 aa).

A flavodoxin-reductase-like region spans residues 1–158 (MDTKALHTLT…YYHQVKRGTT (158 aa)). A Rubredoxin-like domain is found at 178–229 (SPKYQCTICNYVYDPVQGDPEHGIAPGTPFADLPEDWTCPICGAGKDAFEQI). Residues Cys-183, Cys-186, Cys-216, and Cys-219 each contribute to the Fe cation site.

The protein in the N-terminal section; belongs to the flavodoxin reductase family. Homodimer. Requires Fe cation as cofactor. FMN serves as cofactor.

In terms of biological role, has nitric oxide reductase activity in combination with FprA; probably involved in nitrosative stress protection. Acts as an NADH:FprA oxidoreductase. The chain is High molecular weight rubredoxin (hrb) from Moorella thermoacetica (strain ATCC 39073 / JCM 9320).